The following is a 428-amino-acid chain: MPRVYIGSLRELNHNDNVEIYGWLQDLKLLKNVSFLIMRDRTGTVQVTFKNTPDIVNLLKELPRESVLKISGKINKKSVSKSGLEVSGESVEVLNRSERPLPLPVIDPVQADLETRLNNRFIDLRKRDVSSIFNAESSILWGIREFLHSQGFIEVHTPKIVAAATEGGADLFPVKYFENDAYLNQSPQLYKEILMSSGFEKVFEVGPAFRAEEHNTTRHLNEFTSIDIEMSFADHNDAMRILENAVKSGIENMINENGKDLQENGINISIPEIPFPRITYKECIKLLEKEGLEFQFGNDFSPEELRIIGRNFKDFYFITEWPSSLRPFYTMPNRDDPTITNSFDLQYREVEVTSGAQRVHDPDLLLKRFNEKKLNIDSFKFYIQAFKYGMPPHAGWGLGLERLTMIVLGLNNIRETTLFPRDRTRIIP.

E166 provides a ligand contact to L-aspartate. The segment at 188 to 191 (QLYK) is aspartate. Position 210 (R210) interacts with L-aspartate. ATP contacts are provided by residues 210-212 (RAE), 218-220 (RHL), and E351. Residues E351 and S354 each contribute to the Mg(2+) site. L-aspartate is bound by residues S354 and R358. 399-402 (GLER) provides a ligand contact to ATP.

It belongs to the class-II aminoacyl-tRNA synthetase family. Type 2 subfamily. In terms of assembly, homodimer. Mg(2+) is required as a cofactor.

It localises to the cytoplasm. The enzyme catalyses tRNA(Asp) + L-aspartate + ATP = L-aspartyl-tRNA(Asp) + AMP + diphosphate. Functionally, catalyzes the attachment of L-aspartate to tRNA(Asp) in a two-step reaction: L-aspartate is first activated by ATP to form Asp-AMP and then transferred to the acceptor end of tRNA(Asp). The polypeptide is Aspartate--tRNA(Asp) ligase (Thermoplasma volcanium (strain ATCC 51530 / DSM 4299 / JCM 9571 / NBRC 15438 / GSS1)).